The following is a 2161-amino-acid chain: MMMMMMMKKMQHQRQQQADHANEANYARGTRLPLSGEGPTSQPNSSKQTVLSWQAAIDAARQAKAAQTMSTSAPPPVGSLSQRKRQQYAKSKKQGNSSNSRPARALFCLSLNNPIRRACISIVEWKPFDIFILLAIFANCVALAIYIPFPEDDSNSTNHNLEKVEYAFLIIFTVETFLKIIAYGLLLHPNAYVRNGWNLLDFVIVIVGLFSVILEQLTKETEGGNHSSGKSGGFDVKALRAFRVLRPLRLVSGVPSLQVVLNSIIKAMVPLLHIALLVLFVIIIYAIIGLELFIGKMHKTCFFADSDIVAEEDPAPCAFSGNGRQCTANGTECRSGWVGPNGGITNFDNFAFAMLTVFQCITMEGWTDVLYWMNDAMGFELPWVYFVSLVIFGSFFVLNLVLGVLSGEFSKEREKAKARGDFQKLREKQQLEEDLKGYLDWITQAEDIDPENEEEGGEEGKRNTSMPTSETESVNTENVSGEGENRGCCGSLCQAISKSKLSRRWRRWNRFNRRRCRAAVKSVTFYWLVIVLVFLNTLTISSEHYNQPDWLTQIQDIANKVLLALFTCEMLVKMYSLGLQAYFVSLFNRFDCFVVCGGITETILVELEIMSPLGISVFRCVRLLRIFKVTRHWTSLSNLVASLLNSMKSIASLLLLLFLFIIIFSLLGMQLFGGKFNFDETQTKRSTFDNFPQALLTVFQILTGEDWNAVMYDGIMAYGGPSSSGMIVCIYFIILFICGNYILLNVFLAIAVDNLADAESLNTAQKEEAEEKERKKIARKESLENKKNNKPEVNQIANSDNKVTIDDYREEDEDKDPYPPCDVPVGEEEEEEEEDEPEVPAGPRPRRISELNMKEKIAPIPEGSAFFILSKTNPIRVGCHKLINHHIFTNLILVFIMLSSAALAAEDPIRSHSFRNTILGYFDYAFTAIFTVEILLKMTTFGAFLHKGAFCRNYFNLLDMLVVGVSLVSFGIQSSAISVVKILRVLRVLRPLRAINRAKGLKHVVQCVFVAIRTIGNIMIVTTLLQFMFACIGVQLFKGKFYRCTDEAKSNPEECRGLFILYKDGDVDSPVVRERIWQNSDFNFDNVLSAMMALFTVSTFEGWPALLYKAIDSNGENIGPIYNHRVEISIFFIIYIIIVAFFMMNIFVGFVIVTFQEQGEKEYKNCELDKNQRQCVEYALKARPLRRYIPKNPYQYKFWYVVNSSPFEYMMFVLIMLNTLCLAMQHYEQSKMFNDAMDILNMVFTGVFTVEMVLKVIAFKPKGYFSDAWNTFDSLIVIGSIIDVALSEADPTESENVPVPTATPGNSEESNRISITFFRLFRVMRLVKLLSRGEGIRTLLWTFIKSFQALPYVALLIAMLFFIYAVIGMQMFGKVAMRDNNQINRNNNFQTFPQAVLLLFRCATGEAWQEIMLACLPGKLCDPESDYNPGEEYTCGSNFAIVYFISFYMLCAFLIINLFVAVIMDNFDYLTRDWSILGPHHLDEFKRIWSEYDPEAKGRIKHLDVVTLLRRIQPPLGFGKLCPHRVACKRLVAMNMPLNSDGTVMFNATLFALVRTALKIKTEGNLEQANEELRAVIKKIWKKTSMKLLDQVVPPAGDDEVTVGKFYATFLIQDYFRKFKKRKEQGLVGKYPAKNTTIALQAGLRTLHDIGPEIRRAISCDLQDDEPEETKREEEDDVFKRNGALLGNHVNHVNSDRRDSLQQTNTTHRPLHVQRPSIPPASDTEKPLFPPAGNSVCHNHHNHNSIGKQVPTSTNANLNNANMSKAAHGKRPSIGNLEHVSENGHHSSHKHDREPQRRSSVKRTRYYETYIRSDSGDEQLPTICREDPEIHGYFRDPHCLGEQEYFSSEECYEDDSSPTWSRQNYGYYSRYPGRNIDSERPRGYHHPQGFLEDDDSPVCYDSRRSPRRRLLPPTPASHRRSSFNFECLRRQSSQEEVPSSPIFPHRTALPLHLMQQQIMAVAGLDSSKAQKYSPSHSTRSWATPPATPPYRDWTPCYTPLIQVEQSEALDQVNGSLPSLHRSSWYTDEPDISYRTFTPASLTVPSSFRNKNSDKQRSADSLVEAVLISEGLGRYARDPKFVSATKHEIADACDLTIDEMESAASTLLNGNVRPRANGDVGPLSHRQDYELQDFGPGYSDEEPDPGRDEEDLADEMICITTL.

Disordered stretches follow at residues 1–21 (MMMMMMMKKMQHQRQQQADHA), 30–49 (TRLPLSGEGPTSQPNSSKQT), and 64–100 (KAAQTMSTSAPPPVGSLSQRKRQQYAKSKKQGNSSNS). At 1–126 (MMMMMMMKKM…RACISIVEWK (126 aa)) the chain is on the cytoplasmic side. Polar residues predominate over residues 38-49 (GPTSQPNSSKQT). Residues 82–93 (QRKRQQYAKSKK) show a composition bias toward basic residues. An I repeat occupies 113-409 (NPIRRACISI…LVLGVLSGEF (297 aa)). A helical transmembrane segment spans residues 127–145 (PFDIFILLAIFANCVALAI). The Extracellular segment spans residues 146-163 (YIPFPEDDSNSTNHNLEK). Asn-155 carries N-linked (GlcNAc...) asparagine glycosylation. A helical membrane pass occupies residues 164-183 (VEYAFLIIFTVETFLKIIAY). The Cytoplasmic portion of the chain corresponds to 184–195 (GLLLHPNAYVRN). Residues 196-214 (GWNLLDFVIVIVGLFSVIL) form a helical membrane-spanning segment. At 215 to 235 (EQLTKETEGGNHSSGKSGGFD) the chain is on the extracellular side. Residue Asn-225 is glycosylated (N-linked (GlcNAc...) asparagine). The chain crosses the membrane as a helical span at residues 236-254 (VKALRAFRVLRPLRLVSGV). Residues 255–273 (PSLQVVLNSIIKAMVPLLH) are Cytoplasmic-facing. Residues 274 to 293 (IALLVLFVIIIYAIIGLELF) traverse the membrane as a helical segment. Over 294–381 (IGKMHKTCFF…WMNDAMGFEL (88 aa)) the chain is Extracellular. Asn-329 carries an N-linked (GlcNAc...) asparagine glycan. A Ca(2+)-binding site is contributed by Glu-364. Residues 382–406 (PWVYFVSLVIFGSFFVLNLVLGVLS) form a helical membrane-spanning segment. Topologically, residues 407-523 (GEFSKEREKA…RRCRAAVKSV (117 aa)) are cytoplasmic. The tract at residues 429–446 (QQLEEDLKGYLDWITQAE) is binding to the beta subunit. A disordered region spans residues 449–482 (DPENEEEGGEEGKRNTSMPTSETESVNTENVSGE). A compositionally biased stretch (polar residues) spans 463-479 (NTSMPTSETESVNTENV). The stretch at 509–755 (NRFNRRRCRA…VFLAIAVDNL (247 aa)) is one II repeat. Residues 524 to 543 (TFYWLVIVLVFLNTLTISSE) traverse the membrane as a helical segment. Residues 544-558 (HYNQPDWLTQIQDIA) are Extracellular-facing. The helical transmembrane segment at 559 to 577 (NKVLLALFTCEMLVKMYSL) threads the bilayer. Residues 578–585 (GLQAYFVS) are Cytoplasmic-facing. The chain crosses the membrane as a helical span at residues 586 to 604 (LFNRFDCFVVCGGITETIL). Residues 605–614 (VELEIMSPLG) lie on the Extracellular side of the membrane. A helical membrane pass occupies residues 615–633 (ISVFRCVRLLRIFKVTRHW). The Cytoplasmic portion of the chain corresponds to 634–652 (TSLSNLVASLLNSMKSIAS). A helical membrane pass occupies residues 653–673 (LLLLLFLFIIIFSLLGMQLFG). Residues 674–727 (GKFNFDETQTKRSTFDNFPQALLTVFQILTGEDWNAVMYDGIMAYGGPSSSGMI) are Extracellular-facing. A Ca(2+)-binding site is contributed by Glu-705. The chain crosses the membrane as a helical span at residues 728–752 (VCIYFIILFICGNYILLNVFLAIAV). The Cytoplasmic segment spans residues 753–886 (DNLADAESLN…VGCHKLINHH (134 aa)). A compositionally biased stretch (basic and acidic residues) spans 766 to 790 (KEEAEEKERKKIARKESLENKKNNK). Residues 766–850 (KEEAEEKERK…AGPRPRRISE (85 aa)) are disordered. Positions 791 to 802 (PEVNQIANSDNK) are enriched in polar residues. A compositionally biased stretch (acidic residues) spans 825 to 838 (VGEEEEEEEEDEPE). The stretch at 873–1155 (NPIRVGCHKL…IFVGFVIVTF (283 aa)) is one III repeat. A helical membrane pass occupies residues 887–905 (IFTNLILVFIMLSSAALAA). The Extracellular segment spans residues 906-921 (EDPIRSHSFRNTILGY). A helical membrane pass occupies residues 922 to 941 (FDYAFTAIFTVEILLKMTTF). Residues 942 to 953 (GAFLHKGAFCRN) are Cytoplasmic-facing. Residues 954 to 972 (YFNLLDMLVVGVSLVSFGI) form a helical membrane-spanning segment. At 973 to 978 (QSSAIS) the chain is on the extracellular side. A helical transmembrane segment spans residues 979 to 998 (VVKILRVLRVLRPLRAINRA). Over 999-1017 (KGLKHVVQCVFVAIRTIGN) the chain is Cytoplasmic. Residues 1018 to 1037 (IMIVTTLLQFMFACIGVQLF) form a helical membrane-spanning segment. At 1038–1127 (KGKFYRCTDE…IGPIYNHRVE (90 aa)) the chain is on the extracellular side. Residues 1075 to 1165 (RIWQNSDFNF…QEQGEKEYKN (91 aa)) form a dihydropyridine binding region. Glu-1101 serves as a coordination point for Ca(2+). Residues 1128-1148 (ISIFFIIYIIIVAFFMMNIFV) traverse the membrane as a helical segment. The Cytoplasmic segment spans residues 1149 to 1205 (GFVIVTFQEQGEKEYKNCELDKNQRQCVEYALKARPLRRYIPKNPYQYKFWYVVNSS). One copy of the IV repeat lies at 1192 to 1467 (NPYQYKFWYV…LFVAVIMDNF (276 aa)). The helical transmembrane segment at 1206 to 1224 (PFEYMMFVLIMLNTLCLAM) threads the bilayer. The Extracellular segment spans residues 1225–1239 (QHYEQSKMFNDAMDI). Residues 1240–1259 (LNMVFTGVFTVEMVLKVIAF) traverse the membrane as a helical segment. Residues 1260–1266 (KPKGYFS) lie on the Cytoplasmic side of the membrane. A helical membrane pass occupies residues 1267–1288 (DAWNTFDSLIVIGSIIDVALSE). Residues 1289-1313 (ADPTESENVPVPTATPGNSEESNRI) lie on the Extracellular side of the membrane. The helical transmembrane segment at 1314–1333 (SITFFRLFRVMRLVKLLSRG) threads the bilayer. The Cytoplasmic portion of the chain corresponds to 1334–1352 (EGIRTLLWTFIKSFQALPY). Residues 1353 to 1372 (VALLIAMLFFIYAVIGMQMF) form a helical membrane-spanning segment. Topologically, residues 1373 to 1439 (GKVAMRDNNQ…GEEYTCGSNF (67 aa)) are extracellular. The segment at 1420–1486 (LCDPESDYNP…LGPHHLDEFK (67 aa)) is dihydropyridine binding. The phenylalkylamine binding stretch occupies residues 1432-1475 (EYTCGSNFAIVYFISFYMLCAFLIINLFVAVIMDNFDYLTRDWS). A helical transmembrane segment spans residues 1440–1464 (AIVYFISFYMLCAFLIINLFVAVIM). Residues 1465-2161 (DNFDYLTRDW…ADEMICITTL (697 aa)) lie on the Cytoplasmic side of the membrane. Disordered regions lie at residues 1659–1678 (SCDLQDDEPEETKREEEDDV), 1684–1804 (ALLG…VKRT), 1872–1919 (PGRN…ASHR), and 2108–2152 (NGNV…EDLA). Polar residues predominate over residues 1745–1763 (SIGKQVPTSTNANLNNANM). Basic and acidic residues predominate over residues 1779–1797 (HVSENGHHSSHKHDREPQR). The segment covering 2138 to 2152 (SDEEPDPGRDEEDLA) has biased composition (acidic residues).

Belongs to the calcium channel alpha-1 subunit (TC 1.A.1.11) family. CACNA1D subfamily. In terms of assembly, voltage-dependent calcium channels are multisubunit complexes, consisting of alpha-1, alpha-2, beta and delta subunits in a 1:1:1:1 ratio. The channel activity is directed by the pore-forming and voltage-sensitive alpha-1 subunit. In many cases, this subunit is sufficient to generate voltage-sensitive calcium channel activity. The auxiliary subunits beta and alpha-2/delta linked by a disulfide bridge regulate the channel activity. Channel activity is further modulated, depending on the presence of specific delta subunit isoforms. Interacts (via IQ domain) with CABP1 and CABP4 in a calcium independent manner. Interacts with RIMBP2. In terms of tissue distribution, expressed in pancreatic islets and in brain, where it has been seen in cerebral cortex, hippocampus, basal ganglia, habenula and thalamus. Expressed in the small cell lung carcinoma cell line SCC-9. No expression in skeletal muscle.

It is found in the membrane. It carries out the reaction Ca(2+)(in) = Ca(2+)(out). In terms of biological role, voltage-sensitive calcium channels (VSCC) mediate the entry of calcium ions into excitable cells and are also involved in a variety of calcium-dependent processes, including muscle contraction, hormone or neurotransmitter release, gene expression, cell motility, cell division and cell death. The isoform alpha-1D gives rise to L-type calcium currents. Long-lasting (L-type) calcium channels belong to the 'high-voltage activated' (HVA) group. They are blocked by dihydropyridines (DHP), phenylalkylamines, and by benzothiazepines. Functionally, voltage-sensitive calcium channels (VSCC) mediate the entry of calcium ions into excitable cells and are also involved in a variety of calcium-dependent processes, including muscle contraction, hormone or neurotransmitter release, gene expression, cell motility, cell division and cell death. The isoform alpha-1D gives rise to L-type calcium currents. This is Voltage-dependent L-type calcium channel subunit alpha-1D (CACNA1D) from Homo sapiens (Human).